Here is a 547-residue protein sequence, read N- to C-terminus: Chaperonin GroEL (547 aa).

Residues 30–33 (TLGP), Lys51, 87–91 (DGTTT), Gly415, 479–481 (NAA), and Asp495 contribute to the ATP site.

Belongs to the chaperonin (HSP60) family. As to quaternary structure, forms a cylinder of 14 subunits composed of two heptameric rings stacked back-to-back. Interacts with the co-chaperonin GroES.

It is found in the cytoplasm. The catalysed reaction is ATP + H2O + a folded polypeptide = ADP + phosphate + an unfolded polypeptide.. Functionally, together with its co-chaperonin GroES, plays an essential role in assisting protein folding. The GroEL-GroES system forms a nano-cage that allows encapsulation of the non-native substrate proteins and provides a physical environment optimized to promote and accelerate protein folding. The sequence is that of Chaperonin GroEL from Acinetobacter baumannii (strain ACICU).